The sequence spans 617 residues: V-type proton ATPase catalytic subunit A (617 aa).

Threonine 136 is modified (phosphothreonine). Position 250–257 (glycine 250–threonine 257) interacts with ATP. Serine 384 bears the Phosphoserine; by AMPK mark.

This sequence belongs to the ATPase alpha/beta chains family. In terms of assembly, V-ATPase is a heteromultimeric enzyme made up of two complexes: the ATP-hydrolytic V1 complex and the proton translocation V0 complex. The V1 complex consists of three catalytic AB heterodimers that form a heterohexamer, three peripheral stalks each consisting of EG heterodimers, one central rotor including subunits D and F, and the regulatory subunits C and H. The proton translocation complex V0 consists of the proton transport subunit a, a ring of proteolipid subunits c9c'', rotary subunit d, subunits e and f, and the accessory subunits ATP6AP1/Ac45 and ATP6AP2/PRR. Interacts with the V0 complex V-ATPase subunit a4 ATP6V0A4. Interacts with WFS1. Interacts with alpha-crystallin B chain/CRYAB and with MTOR, forming a ternary complex. In terms of processing, phosphorylation at Ser-384 by AMPK down-regulates its enzyme activity.

It is found in the cytoplasm. The protein resides in the cytosol. It localises to the cytoplasmic vesicle. Its subcellular location is the secretory vesicle. The protein localises to the clathrin-coated vesicle membrane. It is found in the lysosome. It catalyses the reaction ATP + H2O + 4 H(+)(in) = ADP + phosphate + 5 H(+)(out). Its activity is regulated as follows. ATP hydrolysis occurs at the interface between the nucleotide-binding domains of subunits A and B. ATP hydrolysis triggers a conformational change in the subunits D and F, which induces a shift of subunit d. The c-ring is subsequently rotated and results in a continuous proton translocation across the membrane. In terms of biological role, catalytic subunit of the V1 complex of vacuolar(H+)-ATPase (V-ATPase), a multisubunit enzyme composed of a peripheral complex (V1) that hydrolyzes ATP and a membrane integral complex (V0) that translocates protons. V-ATPase is responsible for acidifying and maintaining the pH of intracellular compartments and in some cell types, is targeted to the plasma membrane, where it is responsible for acidifying the extracellular environment. In aerobic conditions, involved in intracellular iron homeostasis, thus triggering the activity of Fe(2+) prolyl hydroxylase (PHD) enzymes, and leading to HIF1A hydroxylation and subsequent proteasomal degradation. May play a role in neurite development and synaptic connectivity. The chain is V-type proton ATPase catalytic subunit A (ATP6V1A) from Sus scrofa (Pig).